The chain runs to 132 residues: UPF0060 membrane protein SG1469 (132 aa).

3 helical membrane passes run 5–25 (VLLY…PYCY), 32–52 (LLLI…VLYP), and 60–80 (AAYG…IDGI).

Belongs to the UPF0060 family.

The protein resides in the cell inner membrane. This is UPF0060 membrane protein SG1469 from Sodalis glossinidius (strain morsitans).